We begin with the raw amino-acid sequence, 398 residues long: Alpha-2,8-sialyltransferase 8F (398 aa).

The Cytoplasmic segment spans residues 1–3 (MRS). A helical; Signal-anchor for type II membrane protein membrane pass occupies residues 4–24 (GGTLFALIGSLMLLLLLRMLW). The Lumenal segment spans residues 25-398 (CPADAPARSR…KLQFSKCETA (374 aa)). 4 N-linked (GlcNAc...) asparagine glycosylation sites follow: Asn66, Asn93, Asn151, and Asn196. 2 disulfide bridges follow: Cys186-Cys335 and Cys200-Cys395. Residues Asn214, 236-238 (NPS), and 322-324 (STG) contribute to the substrate site. His370 functions as the Proton donor/acceptor in the catalytic mechanism.

The protein belongs to the glycosyltransferase 29 family. In terms of tissue distribution, highly expressed in kidney and expressed and all tissues tested.

It is found in the golgi apparatus membrane. It catalyses the reaction a ganglioside GM3 + CMP-N-acetyl-beta-neuraminate = a ganglioside GD3 + CMP + H(+). The catalysed reaction is a ganglioside GM3 (d18:1(4E)) + CMP-N-acetyl-beta-neuraminate = a ganglioside GD3 (d18:1(4E)) + CMP + H(+). It carries out the reaction a ganglioside GD1a (d18:1(4E)) + CMP-N-acetyl-beta-neuraminate = a ganglioside GT1a (d18:1(4E)) + CMP + H(+). The enzyme catalyses a ganglioside GD1a + CMP-N-acetyl-beta-neuraminate = a ganglioside GT1a + CMP + H(+). It catalyses the reaction a ganglioside GM1b (d18:1(4E)) + CMP-N-acetyl-beta-neuraminate = a ganglioside GD1c (d18:1(4E)) + CMP + H(+). The catalysed reaction is a ganglioside GM1b + CMP-N-acetyl-beta-neuraminate = a ganglioside GD1c + CMP + H(+). It carries out the reaction a ganglioside GM4 (d18:1(4E)) + CMP-N-acetyl-beta-neuraminate = an N-acetyl-alpha-neuraminosyl-(2-&gt;8)-N-acetyl-alpha-neuraminosyl-(2-&gt;3)-beta-D-galactosyl-(1&lt;-&gt;1')-N-acylsphing-4-enine + CMP + H(+). The enzyme catalyses N-acetyl-alpha-neuraminosyl-(2-&gt;3)-beta-D-galactosyl-(1&lt;-&gt;1')-ceramide + CMP-N-acetyl-beta-neuraminate = N-acetyl-alpha-neuraminosyl-(2-&gt;8)-N-acetyl-alpha-neuraminosyl-(2-&gt;3)-beta-D-galactosyl-(1&lt;-&gt;1')-ceramide + CMP + H(+). It catalyses the reaction a ganglioside GT1b (d18:1(4E)) + CMP-N-acetyl-beta-neuraminate = a ganglioside GQ1b (d18:1(4E)) + CMP + H(+). The catalysed reaction is a ganglioside GT1b + CMP-N-acetyl-beta-neuraminate = a ganglioside GQ1b + CMP + H(+). The protein operates within protein modification; protein glycosylation. Its function is as follows. Alpha-2,8-sialyltransferase that prefers O-glycans to N-glycans or glycolipids as acceptor substrates. The minimal acceptor substrate is the NeuAc-alpha-2,3(6)-Gal sequence at the non-reducing end of their carbohydrate groups. This is Alpha-2,8-sialyltransferase 8F from Mus musculus (Mouse).